We begin with the raw amino-acid sequence, 184 residues long: METFNHIDIKKYTREDLLYLRNTNNVLFKMFQKQVDEIACLSSKEQKLCGTLTSINNIINENYTIYCLIHTDGLIGFIKIGEKNLYLYDKIKLHYGKCTCVLDFYILEKFQKRGLGIKIFNFMLKDNDISAFCLCYDNPSYKLQNFLKKYFSPCVLIKQPNHFVIFSNYFKNVSIKKVYERISN.

An N-acetyltransferase domain is found at 1-170 (METFNHIDIK…NHFVIFSNYF (170 aa)). Acetyl-CoA-binding positions include 104–117 (FYIL…GLGI) and 140–149 (SYKLQNFLKK).

The protein belongs to the acetyltransferase ATAT1 family.

The enzyme catalyses L-lysyl-[alpha-tubulin] + acetyl-CoA = N(6)-acetyl-L-lysyl-[alpha-tubulin] + CoA + H(+). Functionally, specifically acetylates 'Lys-40' in alpha-tubulin on the lumenal side of microtubules. Promotes microtubule destabilization and accelerates microtubule dynamics; this activity may be independent of acetylation activity. Acetylates alpha-tubulin with a slow enzymatic rate, due to a catalytic site that is not optimized for acetyl transfer. Enters the microtubule through each end and diffuses quickly throughout the lumen of microtubules. Acetylates only long/old microtubules because of its slow acetylation rate since it does not have time to act on dynamically unstable microtubules before the enzyme is released. In Plasmodium falciparum (isolate 3D7), this protein is Alpha-tubulin N-acetyltransferase.